The chain runs to 346 residues: Flap endonuclease 1 (346 aa).

Positions 1-102 (MGVTELGKLI…AEIEERRKAK (102 aa)) are N-domain. 7 residues coordinate Mg(2+): Asp31, Asp84, Glu156, Glu158, Asp177, Asp179, and Asp239. Positions 120-261 (EVAKYAKRAI…RALKLIWEFG (142 aa)) are I-domain.

Belongs to the XPG/RAD2 endonuclease family. FEN1 subfamily. In terms of assembly, interacts with PCNA. PCNA stimulates the nuclease activity without altering cleavage specificity. It depends on Mg(2+) as a cofactor.

In terms of biological role, structure-specific nuclease with 5'-flap endonuclease and 5'-3' exonuclease activities involved in DNA replication and repair. During DNA replication, cleaves the 5'-overhanging flap structure that is generated by displacement synthesis when DNA polymerase encounters the 5'-end of a downstream Okazaki fragment. Binds the unpaired 3'-DNA end and kinks the DNA to facilitate 5' cleavage specificity. Cleaves one nucleotide into the double-stranded DNA from the junction in flap DNA, leaving a nick for ligation. Also involved in the base excision repair (BER) pathway. Acts as a genome stabilization factor that prevents flaps from equilibrating into structures that lead to duplications and deletions. Also possesses 5'-3' exonuclease activity on nicked or gapped double-stranded DNA. The protein is Flap endonuclease 1 of Pyrobaculum arsenaticum (strain DSM 13514 / JCM 11321 / PZ6).